A 215-amino-acid chain; its full sequence is Large ribosomal subunit protein uL4 (215 aa).

Residues 43-100 (AAKRQGTHSTKTRGEVSGGGKKPYRQKGSGRARQGSTRAPQFTGGGTVHGPKPRDYSQ) form a disordered region.

This sequence belongs to the universal ribosomal protein uL4 family. Part of the 50S ribosomal subunit.

Its function is as follows. One of the primary rRNA binding proteins, this protein initially binds near the 5'-end of the 23S rRNA. It is important during the early stages of 50S assembly. It makes multiple contacts with different domains of the 23S rRNA in the assembled 50S subunit and ribosome. Functionally, forms part of the polypeptide exit tunnel. This Mycolicibacterium smegmatis (Mycobacterium smegmatis) protein is Large ribosomal subunit protein uL4.